The chain runs to 434 residues: Enolase (434 aa).

Gln163 lines the (2R)-2-phosphoglycerate pocket. Glu205 functions as the Proton donor in the catalytic mechanism. Residues Asp242, Glu291, and Asp318 each coordinate Mg(2+). Residues Lys343, Arg372, Ser373, and Lys394 each contribute to the (2R)-2-phosphoglycerate site. The Proton acceptor role is filled by Lys343.

The protein belongs to the enolase family. The cofactor is Mg(2+).

It is found in the cytoplasm. The protein localises to the secreted. Its subcellular location is the cell surface. The enzyme catalyses (2R)-2-phosphoglycerate = phosphoenolpyruvate + H2O. It functions in the pathway carbohydrate degradation; glycolysis; pyruvate from D-glyceraldehyde 3-phosphate: step 4/5. In terms of biological role, catalyzes the reversible conversion of 2-phosphoglycerate (2-PG) into phosphoenolpyruvate (PEP). It is essential for the degradation of carbohydrates via glycolysis. This is Enolase from Streptococcus thermophilus (strain ATCC BAA-491 / LMD-9).